Here is a 554-residue protein sequence, read N- to C-terminus: Nuclear division defective protein 1 (554 aa).

2 disordered regions span residues 1–31 (MDRDISYQQNYTSTGATATSSRQPSTDNNAD) and 98–117 (IQQQQQQQQQQQQQQQALGS). Positions 98-113 (IQQQQQQQQQQQQQQQ) are enriched in low complexity. Thr-319 bears the Phosphothreonine; by CDC28 mark. Disordered regions lie at residues 410–475 (PTPN…GKKP) and 493–554 (SSSS…FNSQ). The segment covering 411–427 (TPNCNSLHSTTTGTSAL) has biased composition (polar residues). The span at 448–465 (SSSNTVSFKSKSGNNNSK) shows a compositional bias: low complexity. Residues 466 to 475 (GRIKKNGKKP) show a composition bias toward basic residues. Positions 493 to 513 (SSSSLSSSLNASSSAGNSNSN) are enriched in low complexity. Residues 515 to 524 (TKKRASKLKR) show a composition bias toward basic residues. Low complexity predominate over residues 525–536 (SQSLLSDSGSKS). Residues 539 to 554 (RKSCNSKSNGNLFNSQ) show a composition bias toward polar residues.

Forms an activator complex with FKH2. In terms of processing, phosphorylation of Thr-319 by CDC28 is required for the interaction with FKH2 and recruitment to promoters.

Its subcellular location is the cytoplasm. The protein resides in the nucleus. Functionally, transcription activator involved in G2/M transcription through its association with FKH2. The polypeptide is Nuclear division defective protein 1 (NDD1) (Saccharomyces cerevisiae (strain ATCC 204508 / S288c) (Baker's yeast)).